Consider the following 239-residue polypeptide: Small ribosomal subunit protein uS2c (239 aa).

It belongs to the universal ribosomal protein uS2 family.

The protein resides in the plastid. It is found in the organellar chromatophore. This Paulinella chromatophora protein is Small ribosomal subunit protein uS2c (rps2).